The primary structure comprises 765 residues: MISMDSTPTLNFETSDNLDGLPDGSNAFKINIDDLEFGQEIGKGAYGKIFKGEYFGTPVAIKEISLQPNDVKYKDLTKFIQREVAMLRFSHPNLVQFIGVSERGSSLYIVTEFVQGGDLAYYLFRNKFDDTPEQYIHRKVNVGSSSTPDLSDPTVHNGEKLVQLAWPLRIKIAYDVACAMAYLHSRNVIHRDLKSTNLLVGDNWRIKVCDMGFARTAQVGGGSRAKRTMTICGTTNCMAPEVVLGQDYNEACDVFSYGIVLSEIITRMDTTNNLRPSSLKYGLDVDVLLPLVPKDCPPPFLKLVLDCTEYDPDNRPTFKEITERLKSLTKKLSTPHILPPLRVLAQSPLTSPIQSPISTKNQFNPNLFKSIVHNNHNHSSSSNNSSGYNNNSNHNINITVNSININSSNINNNNNNNNINNNNNNNNNISFSGRQEELMSPISMGDESDLDSDDEDDSYTSSASSSRCNSRNGKIINGGKQMGYIIKHHYSSDLESSPNGNNINNNNNNNNNNNNNNNNNNNNNNNSGNNGICINSLSLGVSSSPIQIGLSSKSPTPPSMSPPTSVKSYHPNNNNNNININNTNTNINNNKISSSPPVKNSPKSNRFSNGSLKQQFQQYQQQQQQLFLNINEDDKELEELSKSIDDTFRLHFSPLNISPTQNNNNNNNNSNNNNGNVNHNHHHLNQHSHINGHLISPTIISSSSTTSSSTSTPSLVSLTSSRDHHHHHISVTSSPTNIKPLSSSIASNSSVFTPLGSGLTRTVQS.

In terms of domain architecture, Protein kinase spans 35–328 (LEFGQEIGKG…KEITERLKSL (294 aa)). ATP is bound by residues 41-49 (IGKGAYGKI) and K62. Catalysis depends on D192, which acts as the Proton acceptor. 7 disordered regions span residues 371 to 393 (IVHNNHNHSSSSNNSSGYNNNSN), 443 to 477 (SMGDESDLDSDDEDDSYTSSASSSRCNSRNGKIIN), 491 to 527 (SSDLESSPNGNNINNNNNNNNNNNNNNNNNNNNNNNS), 545 to 620 (PIQI…QQYQ), 654 to 684 (PLNISPTQNNNNNNNNSNNNNGNVNHNHHHL), 699 to 738 (IISSSSTTSSSTSTPSLVSLTSSRDHHHHHISVTSSPTNI), and 746 to 765 (ASNSSVFTPLGSGLTRTVQS). Residues 446–458 (DESDLDSDDEDDS) show a composition bias toward acidic residues. Composition is skewed to low complexity over residues 459–470 (YTSSASSSRCNS), 499–527 (NGNNINNNNNNNNNNNNNNNNNNNNNNNS), 562–605 (PPTS…PKSN), 662–678 (NNNNNNNNSNNNNGNVN), and 699–720 (IISSSSTTSSSTSTPSLVSLTS).

This sequence belongs to the protein kinase superfamily. TKL Ser/Thr protein kinase family.

The enzyme catalyses L-seryl-[protein] + ATP = O-phospho-L-seryl-[protein] + ADP + H(+). It carries out the reaction L-threonyl-[protein] + ATP = O-phospho-L-threonyl-[protein] + ADP + H(+). In Dictyostelium discoideum (Social amoeba), this protein is Probable serine/threonine-protein kinase DDB_G0271402.